The chain runs to 426 residues: Serine--tRNA ligase (426 aa).

231-233 (TAE) lines the L-serine pocket. Residues 262 to 264 (RRE) and V278 contribute to the ATP site. An L-serine-binding site is contributed by E285. An ATP-binding site is contributed by 349 to 352 (EVSS). Residue S384 participates in L-serine binding.

Belongs to the class-II aminoacyl-tRNA synthetase family. Type-1 seryl-tRNA synthetase subfamily. In terms of assembly, homodimer. The tRNA molecule binds across the dimer.

Its subcellular location is the cytoplasm. The catalysed reaction is tRNA(Ser) + L-serine + ATP = L-seryl-tRNA(Ser) + AMP + diphosphate + H(+). It catalyses the reaction tRNA(Sec) + L-serine + ATP = L-seryl-tRNA(Sec) + AMP + diphosphate + H(+). It participates in aminoacyl-tRNA biosynthesis; selenocysteinyl-tRNA(Sec) biosynthesis; L-seryl-tRNA(Sec) from L-serine and tRNA(Sec): step 1/1. In terms of biological role, catalyzes the attachment of serine to tRNA(Ser). Is also able to aminoacylate tRNA(Sec) with serine, to form the misacylated tRNA L-seryl-tRNA(Sec), which will be further converted into selenocysteinyl-tRNA(Sec). The polypeptide is Serine--tRNA ligase (Chlamydia felis (strain Fe/C-56) (Chlamydophila felis)).